The following is a 228-amino-acid chain: Phosphoribosylformylglycinamidine synthase subunit PurQ (228 aa).

The Glutamine amidotransferase type-1 domain maps to phenylalanine 3–valine 226. The Nucleophile role is filled by cysteine 86. Residues histidine 195 and glutamate 197 contribute to the active site.

In terms of assembly, part of the FGAM synthase complex composed of 1 PurL, 1 PurQ and 2 PurS subunits.

The protein resides in the cytoplasm. It catalyses the reaction N(2)-formyl-N(1)-(5-phospho-beta-D-ribosyl)glycinamide + L-glutamine + ATP + H2O = 2-formamido-N(1)-(5-O-phospho-beta-D-ribosyl)acetamidine + L-glutamate + ADP + phosphate + H(+). The enzyme catalyses L-glutamine + H2O = L-glutamate + NH4(+). The protein operates within purine metabolism; IMP biosynthesis via de novo pathway; 5-amino-1-(5-phospho-D-ribosyl)imidazole from N(2)-formyl-N(1)-(5-phospho-D-ribosyl)glycinamide: step 1/2. Part of the phosphoribosylformylglycinamidine synthase complex involved in the purines biosynthetic pathway. Catalyzes the ATP-dependent conversion of formylglycinamide ribonucleotide (FGAR) and glutamine to yield formylglycinamidine ribonucleotide (FGAM) and glutamate. The FGAM synthase complex is composed of three subunits. PurQ produces an ammonia molecule by converting glutamine to glutamate. PurL transfers the ammonia molecule to FGAR to form FGAM in an ATP-dependent manner. PurS interacts with PurQ and PurL and is thought to assist in the transfer of the ammonia molecule from PurQ to PurL. This Geobacillus sp. (strain WCH70) protein is Phosphoribosylformylglycinamidine synthase subunit PurQ.